Consider the following 103-residue polypeptide: Integration host factor subunit beta (103 aa).

The protein belongs to the bacterial histone-like protein family. In terms of assembly, heterodimer of an alpha and a beta chain.

Its function is as follows. This protein is one of the two subunits of integration host factor, a specific DNA-binding protein that functions in genetic recombination as well as in transcriptional and translational control. This Rhizobium meliloti (strain 1021) (Ensifer meliloti) protein is Integration host factor subunit beta.